The chain runs to 61 residues: Large ribosomal subunit protein uL29 (61 aa).

This sequence belongs to the universal ribosomal protein uL29 family.

The protein is Large ribosomal subunit protein uL29 of Stenotrophomonas maltophilia (strain K279a).